The following is a 431-amino-acid chain: 3-deoxy-D-manno-octulosonic acid transferase (431 aa).

A helical; Signal-anchor membrane pass occupies residues 5–27 (WLTSRLYDAFLVCAFFVSAPRIF). The Proton acceptor role is filled by Glu67. CMP-binding positions include 275–276 (PR), 315–317 (MGV), and 342–345 (NLLE).

It belongs to the glycosyltransferase group 1 family. Glycosyltransferase 30 subfamily.

It is found in the cell inner membrane. The enzyme catalyses lipid IVA (E. coli) + CMP-3-deoxy-beta-D-manno-octulosonate = alpha-Kdo-(2-&gt;6)-lipid IVA (E. coli) + CMP + H(+). It catalyses the reaction alpha-Kdo-(2-&gt;6)-lipid IVA (E. coli) + CMP-3-deoxy-beta-D-manno-octulosonate = alpha-Kdo-(2-&gt;4)-alpha-Kdo-(2-&gt;6)-lipid IVA (E. coli) + CMP + H(+). The catalysed reaction is alpha-Kdo-(2-&gt;4)-alpha-Kdo-(2-&gt;6)-lipid IVA (E. coli) + CMP-3-deoxy-beta-D-manno-octulosonate = alpha-Kdo-(2-&gt;8)-alpha-Kdo-(2-&gt;4)-alpha-Kdo-(2-&gt;6)-lipid IVA (E. coli) + CMP + H(+). The protein operates within bacterial outer membrane biogenesis; LPS core biosynthesis. Functionally, involved in lipopolysaccharide (LPS) biosynthesis. Catalyzes the transfer of three 3-deoxy-D-manno-octulosonate (Kdo) residues from CMP-Kdo to lipid IV(A), the tetraacyldisaccharide-1,4'-bisphosphate precursor of lipid A. Thus generates the genus-specific LPS epitope of Chlamydia, composed of the trisaccharide alpha-Kdo-(2-&gt;8)-alpha-Kdo-(2-&gt;4)-alpha-Kdo. The polypeptide is 3-deoxy-D-manno-octulosonic acid transferase (waaA) (Chlamydia trachomatis serovar A (strain ATCC VR-571B / DSM 19440 / HAR-13)).